The chain runs to 385 residues: Protein pelota homolog (385 aa).

K162 is covalently cross-linked (Glycyl lysine isopeptide (Lys-Gly) (interchain with G-Cter in SUMO2)). Phosphoserine is present on residues S374, S380, S381, and S382.

Belongs to the eukaryotic release factor 1 family. Pelota subfamily. As to quaternary structure, component of the Pelota-HBS1L complex, also named Dom34-Hbs1 complex, composed of PELO and HBS1L. Interacts with PINK1. Interacts with ABCE1. Interacts with CNOT4. Requires a divalent metal cation as cofactor. Ubiquitously expressed.

Its subcellular location is the cytoplasm. Component of the Pelota-HBS1L complex, a complex that recognizes stalled ribosomes and triggers the No-Go Decay (NGD) pathway. In the Pelota-HBS1L complex, PELO recognizes ribosomes stalled at the 3' end of an mRNA and engages stalled ribosomes by destabilizing mRNA in the mRNA channel. Following mRNA extraction from stalled ribosomes by the SKI complex, the Pelota-HBS1L complex promotes recruitment of ABCE1, which drives the disassembly of stalled ribosomes, followed by degradation of damaged mRNAs as part of the NGD pathway. As part of the PINK1-regulated signaling, upon mitochondrial damage is recruited to the ribosome/mRNA-ribonucleoprotein complex associated to mitochondrial outer membrane thereby enabling the recruitment of autophagy receptors and induction of mitophagy. The protein is Protein pelota homolog of Mus musculus (Mouse).